The chain runs to 421 residues: Zinc finger protein 584 (421 aa).

The 72-residue stretch at V17 to R88 folds into the KRAB domain. The span at Q120–K129 shows a compositional bias: basic and acidic residues. The disordered stretch occupies residues Q120–C146. 8 C2H2-type zinc fingers span residues F159–H181, H214–H236, F242–H264, Y270–H292, Y298–H320, F326–H348, Y354–H376, and Y382–H404. Residues K402–C421 are disordered. The segment covering H404–H415 has biased composition (basic and acidic residues).

This sequence belongs to the krueppel C2H2-type zinc-finger protein family.

It is found in the nucleus. In terms of biological role, may be involved in transcriptional regulation. This is Zinc finger protein 584 (ZNF584) from Homo sapiens (Human).